A 331-amino-acid polypeptide reads, in one-letter code: MRFRFGVVVPPAVAGARPELLVVGSRPELGRWEPRGAVRLRPAGTAAGDGALALQEPGLWLGEVELAAEEAAQDGAEPGRVDTFWYKFLKREPGGELSWEGNGPHHDRCCTYNENNLVDGVYCLPIGHWIEATGHTNEMKHTTDFYFNIAGHQAMHYSRILPNIWLGSCPRQVEHVTIKLKHELGITAVMNFQTEWDIVQNSSGCNRYPEPMTPDTMIKLYREEGLAYIWMPTPDMSTEGRVQMLPQAVCLLHALLEKGHIVYVHCNAGVGRSTAAVCGWLQYVMGWNLRKVQYFLMAKRPAVYIDEEALARAQEDFFQKFGKVRSSVCSL.

In terms of domain architecture, CBM20 spans 1-124 (MRFRFGVVVP…NNLVDGVYCL (124 aa)). Ser25 is modified (phosphoserine; by AMPK). Residues Trp32, Lys87, 103-107 (GPHHD), Asp197, Asp235, and Arg241 contribute to the substrate site. The 168-residue stretch at 156–323 (HYSRILPNIW…QEDFFQKFGK (168 aa)) folds into the Tyrosine-protein phosphatase domain. Residue Cys266 is the Phosphocysteine intermediate of the active site. Positions 266-272 (CNAGVGR) match the Glucan phosphatase signature motif CXAGXGR motif. Substrate-binding positions include 267 to 272 (NAGVGR) and Tyr304.

It belongs to the protein-tyrosine phosphatase family. In terms of assembly, homodimer. Interacts with itself. Interacts with PPP1R3B, PPP1R3C, PPP1R3D, HIRIP5, and EPM2AIP1. Binds glycogen and Lafora bodies. Interacts with NHLRC1/malin (via the NHL repeats). Forms a complex with NHLRC1/malin and HSP70. Interacts with PPP1R3D; in the presence of NHLC1/malin the interaction leads to ubiquitination and autophagic degradation of PPP1R3D. Interacts (via the phosphatase domain) with MAPT/Tau; the interaction dephosphorylates MAPT. Isoform 1 and isoform 2 interact to form a heterodimeric complex that lacks phosphatase activity (in vitro). Active phosphatase isoform 7 and isoform 1 interact with each other, but give rise to lower phosphatase activity than isoform 1 or isoform 7 by themselves (in vitro). Active phosphatase isoform 7 and inactive isoform 2 interact with each other, but give rise to lower phosphatase activity than isoform 7 by itself (in vitro). Interacts with PRDM8. Polyubiquitinated by NHLRC1/malin. Post-translationally, phosphorylation on Ser-25 by AMPK affects the phosphatase activity of the enzyme and its ability to homodimerize and interact with NHLRC1, PPP1R3C or PRKAA2. In terms of tissue distribution, expressed in heart, skeletal muscle, kidney, pancreas and brain. Isoform 4 is also expressed in the placenta.

It is found in the cytoplasm. The protein localises to the endoplasmic reticulum membrane. It localises to the cell membrane. Its subcellular location is the nucleus. It carries out the reaction O-phospho-L-tyrosyl-[protein] + H2O = L-tyrosyl-[protein] + phosphate. It catalyses the reaction O-phospho-L-seryl-[protein] + H2O = L-seryl-[protein] + phosphate. The catalysed reaction is O-phospho-L-threonyl-[protein] + H2O = L-threonyl-[protein] + phosphate. Its function is as follows. Plays an important role in preventing glycogen hyperphosphorylation and the formation of insoluble aggregates, via its activity as glycogen phosphatase, and by promoting the ubiquitination of proteins involved in glycogen metabolism via its interaction with the E3 ubiquitin ligase NHLRC1/malin. Shows strong phosphatase activity towards complex carbohydrates in vitro, avoiding glycogen hyperphosphorylation which is associated with reduced branching and formation of insoluble aggregates. Dephosphorylates phosphotyrosine and synthetic substrates, such as para-nitrophenylphosphate (pNPP), and has low activity with phosphoserine and phosphothreonine substrates (in vitro). Has been shown to dephosphorylate MAPT. Forms a complex with NHLRC1/malin and HSP70, which suppresses the cellular toxicity of misfolded proteins by promoting their degradation through the ubiquitin-proteasome system (UPS). Acts as a scaffold protein to facilitate PPP1R3C/PTG ubiquitination by NHLRC1/malin. Also promotes proteasome-independent protein degradation through the macroautophagy pathway. Functionally, does not bind to glycogen. Lacks phosphatase activity and might function as a dominant-negative regulator for the phosphatase activity of isoform 1 and isoform 7. Has phosphatase activity (in vitro). The sequence is that of Laforin (EPM2A) from Homo sapiens (Human).